Here is a 704-residue protein sequence, read N- to C-terminus: Low calcium response locus protein D (704 aa).

7 helical membrane-spanning segments follow: residues 18–35 (IMLA…VLPL), 42–61 (ILIA…AIYI), 108–132 (FVVG…FLVI), 200–220 (AIAG…IGVT), 235–259 (ILTV…GIIV), 278–297 (VVAQ…LFGL), and 304–320 (VTFL…GYML).

It belongs to the FHIPEP (flagella/HR/invasion proteins export pore) family.

It is found in the cell inner membrane. Functionally, could be involved in the secretion of the yop virulence proteins. The chain is Low calcium response locus protein D (lcrD) from Yersinia pestis.